A 406-amino-acid chain; its full sequence is Leucine aminopeptidase 1 (406 aa).

The signal sequence occupies residues 1–18 (MKVTNASLLALLLPAVSG). The propeptide occupies 19–94 (RFVETGEPDR…LRAMTASRKK (76 aa)). Asn-186 is a glycosylation site (N-linked (GlcNAc...) asparagine). Zn(2+) contacts are provided by His-194, Asp-213, Glu-252, and Asp-279. N-linked (GlcNAc...) asparagine glycosylation occurs at Asn-306. Cys-328 and Cys-332 form a disulfide bridge. His-361 contributes to the Zn(2+) binding site.

Belongs to the peptidase M28 family. M28E subfamily. Monomer. Zn(2+) serves as cofactor.

Its subcellular location is the secreted. Extracellular aminopeptidase that allows assimilation of proteinaceous substrates. The protein is Leucine aminopeptidase 1 (LAP1) of Chaetomium globosum (strain ATCC 6205 / CBS 148.51 / DSM 1962 / NBRC 6347 / NRRL 1970) (Soil fungus).